A 493-amino-acid chain; its full sequence is Keratin, type II cuticular Hb3 (493 aa).

Residues 1-111 are head; it reads MTCGFNSIGC…PNAQCVKQEE (111 aa). One can recognise an IF rod domain in the interval 111–422; that stretch reads EKEQIKSLNS…RLLEGEEQRL (312 aa). A coil 1A region spans residues 112 to 146; it reads KEQIKSLNSRFAAFIDKVRFLEQQNKLLETKLQFY. A linker 1 region spans residues 147–156; it reads QNRECCQSNL. The tract at residues 157–257 is coil 1B; sequence EPLFAGYIET…YEEEIRILQS (101 aa). A Glycyl lysine isopeptide (Lys-Gly) (interchain with G-Cter in SUMO1) cross-link involves residue lysine 217. The linker 12 stretch occupies residues 258-274; sequence HISDTSVVVKLDNSRDL. The interval 275–418 is coil 2; that stretch reads NMDCIVAEIK…ATYRRLLEGE (144 aa). The interval 419 to 493 is tail; the sequence is EQRLCEGVEA…GGGSCGQGRH (75 aa).

It belongs to the intermediate filament family. In terms of assembly, heterotetramer of two type I and two type II keratins. Synthesis begins in the cortex 10-15 cell layers above the apex of the dermal papilla and ends abruptly in the middle of the cortex.

This Homo sapiens (Human) protein is Keratin, type II cuticular Hb3 (KRT83).